The sequence spans 211 residues: Uridine kinase (211 aa).

12–19 lines the ATP pocket; the sequence is GGSGSGKT.

Belongs to the uridine kinase family.

The protein localises to the cytoplasm. It catalyses the reaction uridine + ATP = UMP + ADP + H(+). The enzyme catalyses cytidine + ATP = CMP + ADP + H(+). It functions in the pathway pyrimidine metabolism; CTP biosynthesis via salvage pathway; CTP from cytidine: step 1/3. Its pathway is pyrimidine metabolism; UMP biosynthesis via salvage pathway; UMP from uridine: step 1/1. The protein is Uridine kinase of Geobacillus kaustophilus (strain HTA426).